The sequence spans 461 residues: Ribosomal protein uS12 methylthiotransferase RimO (461 aa).

Residues P9 to P124 form the MTTase N-terminal domain. The [4Fe-4S] cluster site is built by C18, C54, C83, C159, C163, and C166. Residues L145–K387 enclose the Radical SAM core domain. In terms of domain architecture, TRAM spans Q389–V461.

Belongs to the methylthiotransferase family. RimO subfamily. [4Fe-4S] cluster is required as a cofactor.

It localises to the cytoplasm. The enzyme catalyses L-aspartate(89)-[ribosomal protein uS12]-hydrogen + (sulfur carrier)-SH + AH2 + 2 S-adenosyl-L-methionine = 3-methylsulfanyl-L-aspartate(89)-[ribosomal protein uS12]-hydrogen + (sulfur carrier)-H + 5'-deoxyadenosine + L-methionine + A + S-adenosyl-L-homocysteine + 2 H(+). Functionally, catalyzes the methylthiolation of an aspartic acid residue of ribosomal protein uS12. This Polaromonas naphthalenivorans (strain CJ2) protein is Ribosomal protein uS12 methylthiotransferase RimO.